The sequence spans 355 residues: Uroporphyrinogen decarboxylase (355 aa).

Residues 27-31, aspartate 77, tyrosine 154, threonine 209, and histidine 327 contribute to the substrate site; that span reads RQAGR.

This sequence belongs to the uroporphyrinogen decarboxylase family. As to quaternary structure, homodimer.

Its subcellular location is the cytoplasm. It catalyses the reaction uroporphyrinogen III + 4 H(+) = coproporphyrinogen III + 4 CO2. Its pathway is porphyrin-containing compound metabolism; protoporphyrin-IX biosynthesis; coproporphyrinogen-III from 5-aminolevulinate: step 4/4. Its function is as follows. Catalyzes the decarboxylation of four acetate groups of uroporphyrinogen-III to yield coproporphyrinogen-III. The protein is Uroporphyrinogen decarboxylase of Tolumonas auensis (strain DSM 9187 / NBRC 110442 / TA 4).